Reading from the N-terminus, the 157-residue chain is uncharacterized protein (157 aa).

The helical transmembrane segment at 42-64 (SCIRLIVMFICVAMITCPNSLRF) threads the bilayer.

It is found in the membrane. This is an uncharacterized protein from Saccharomyces cerevisiae (strain ATCC 204508 / S288c) (Baker's yeast).